A 362-amino-acid chain; its full sequence is Probable cinnamyl alcohol dehydrogenase 8D (362 aa).

Cys-45 provides a ligand contact to Zn(2+). Thr-47 provides a ligand contact to NADP(+). Zn(2+) contacts are provided by His-67, Glu-68, Cys-98, Cys-101, Cys-104, Cys-112, and Cys-161. NADP(+) is bound by residues Thr-165, 186–191, 209–214, Thr-249, Gly-273, and 296–298; these read GLGGLG, SSSPAK, and NGV.

It belongs to the zinc-containing alcohol dehydrogenase family. In terms of assembly, homodimer. The cofactor is Zn(2+).

The enzyme catalyses (E)-cinnamyl alcohol + NADP(+) = (E)-cinnamaldehyde + NADPH + H(+). It catalyses the reaction (E)-coniferol + NADP(+) = (E)-coniferaldehyde + NADPH + H(+). It carries out the reaction (E)-sinapyl alcohol + NADP(+) = (E)-sinapaldehyde + NADPH + H(+). The catalysed reaction is (E)-4-coumaroyl alcohol + NADP(+) = (E)-4-coumaraldehyde + NADPH + H(+). The enzyme catalyses (E)-caffeyl alcohol + NADP(+) = (E)-caffeyl aldehyde + NADPH + H(+). Its pathway is aromatic compound metabolism; phenylpropanoid biosynthesis. Functionally, involved in lignin biosynthesis. Catalyzes the final step specific for the production of lignin monomers. Catalyzes the NADPH-dependent reduction of coniferaldehyde, 5-hydroxyconiferaldehyde, sinapaldehyde, 4-coumaraldehyde and caffeyl aldehyde to their respective alcohols. The chain is Probable cinnamyl alcohol dehydrogenase 8D from Oryza sativa subsp. japonica (Rice).